Consider the following 280-residue polypeptide: Phosphonoacetaldehyde hydrolase (280 aa).

The active-site Nucleophile is the D23. Positions 23 and 25 each coordinate Mg(2+). K64 acts as the Schiff-base intermediate with substrate in catalysis. D197 is a Mg(2+) binding site.

It belongs to the HAD-like hydrolase superfamily. PhnX family. Homodimer. The cofactor is Mg(2+).

It catalyses the reaction phosphonoacetaldehyde + H2O = acetaldehyde + phosphate + H(+). Involved in phosphonate degradation. The chain is Phosphonoacetaldehyde hydrolase from Bordetella avium (strain 197N).